The sequence spans 262 residues: MFELIFPGWLAGVLLSLTTGPLGSFIVWRRMSSFGDTLSHSSLLGIALSIAFNINSFYAILILMSFIAIILAWLEELLPVSLDTVLNIISHSSLSLGMVFISLISSKKEINITNYLFGDLLSVTKNDLITISISSILILSILLFRWHSILSSTINEELSQIDGINVLYARLTIMLMTAFTIAIAIKFVGALLITSLLIIPPATAQHFSGSPEKMVIIAIIVSILSVTGGISLSVFYNTPASPSIVLCSSFLCLISNIKKHFY.

The next 7 helical transmembrane spans lie at 8–28 (GWLA…FIVW), 54–74 (INSF…LAWL), 84–104 (TVLN…ISLI), 129–149 (ITIS…WHSI), 179–199 (FTIA…LLII), 215–235 (VIIA…LSVF), and 238–254 (TPAS…LCLI).

Belongs to the ABC-3 integral membrane protein family.

It is found in the cell membrane. In terms of biological role, involved in the high-affinity zinc uptake transport system. In Buchnera aphidicola subsp. Acyrthosiphon pisum (strain APS) (Acyrthosiphon pisum symbiotic bacterium), this protein is High-affinity zinc uptake system membrane protein ZnuB (znuB).